The following is a 129-amino-acid chain: Phosphomevalonate dehydratase small subunit (129 aa).

Ser-61 serves as the catalytic Proton acceptor.

Belongs to the AcnX type II small subunit family. Heterodimer composed of a large subunit (PMDh-L) and a small subunit (PMDh-S).

The enzyme catalyses (R)-5-phosphomevalonate = (2E)-3-methyl-5-phosphooxypent-2-enoate + H2O. It participates in isoprenoid biosynthesis; isopentenyl diphosphate biosynthesis via mevalonate pathway. Functionally, component of a hydro-lyase that catalyzes the dehydration of mevalonate 5-phosphate (MVA5P) to form trans-anhydromevalonate 5-phosphate (tAHMP). Involved in the archaeal mevalonate (MVA) pathway, which provides fundamental precursors for isoprenoid biosynthesis, such as isopentenyl diphosphate (IPP) and dimethylallyl diphosphate (DMAPP). The sequence is that of Phosphomevalonate dehydratase small subunit from Methanocaldococcus jannaschii (strain ATCC 43067 / DSM 2661 / JAL-1 / JCM 10045 / NBRC 100440) (Methanococcus jannaschii).